The following is a 734-amino-acid chain: Photosystem I P700 chlorophyll a apoprotein A2 (734 aa).

The next 8 membrane-spanning stretches (helical) occupy residues 46–69, 135–158, 175–199, 273–291, 330–353, 369–395, 417–439, and 517–535; these read IFAS…FHVA, LYTG…LHLQ, LNHH…HVAI, MAHH…GHMY, IHFQ…QHMY, AALY…IFFI, AIIS…LYVH, and FLVH…LILV. [4Fe-4S] cluster contacts are provided by cysteine 559 and cysteine 568. 2 helical membrane-spanning segments follow: residues 575 to 596 and 643 to 665; these read AFYL…YWHW and LSVW…MFLI. Histidine 654, methionine 662, and tyrosine 670 together coordinate chlorophyll a. Tryptophan 671 contacts phylloquinone. A helical transmembrane segment spans residues 707-727; sequence LVGLAHFSVGYIFTYAAFLIA.

This sequence belongs to the PsaA/PsaB family. The PsaA/B heterodimer binds the P700 chlorophyll special pair and subsequent electron acceptors. PSI consists of a core antenna complex that captures photons, and an electron transfer chain that converts photonic excitation into a charge separation. The eukaryotic PSI reaction center is composed of at least 11 subunits. It depends on P700 is a chlorophyll a/chlorophyll a' dimer, A0 is one or more chlorophyll a, A1 is one or both phylloquinones and FX is a shared 4Fe-4S iron-sulfur center. as a cofactor.

Its subcellular location is the plastid. It is found in the chloroplast thylakoid membrane. It catalyses the reaction reduced [plastocyanin] + hnu + oxidized [2Fe-2S]-[ferredoxin] = oxidized [plastocyanin] + reduced [2Fe-2S]-[ferredoxin]. Its function is as follows. PsaA and PsaB bind P700, the primary electron donor of photosystem I (PSI), as well as the electron acceptors A0, A1 and FX. PSI is a plastocyanin-ferredoxin oxidoreductase, converting photonic excitation into a charge separation, which transfers an electron from the donor P700 chlorophyll pair to the spectroscopically characterized acceptors A0, A1, FX, FA and FB in turn. Oxidized P700 is reduced on the lumenal side of the thylakoid membrane by plastocyanin. In Capsella bursa-pastoris (Shepherd's purse), this protein is Photosystem I P700 chlorophyll a apoprotein A2.